The chain runs to 351 residues: Histidinol-phosphate aminotransferase (351 aa).

At Lys215 the chain carries N6-(pyridoxal phosphate)lysine.

The protein belongs to the class-II pyridoxal-phosphate-dependent aminotransferase family. Histidinol-phosphate aminotransferase subfamily. The cofactor is pyridoxal 5'-phosphate.

It carries out the reaction L-histidinol phosphate + 2-oxoglutarate = 3-(imidazol-4-yl)-2-oxopropyl phosphate + L-glutamate. It functions in the pathway amino-acid biosynthesis; L-histidine biosynthesis; L-histidine from 5-phospho-alpha-D-ribose 1-diphosphate: step 7/9. The chain is Histidinol-phosphate aminotransferase from Methanocorpusculum labreanum (strain ATCC 43576 / DSM 4855 / Z).